Here is a 636-residue protein sequence, read N- to C-terminus: Chaperone protein DnaK (636 aa).

Phosphothreonine; by autocatalysis is present on threonine 203. The tract at residues 602-636 (VYGKQQEGAPAQEEPSAEGKKADDEGTVEGEFREV) is disordered. Residues 618 to 636 (AEGKKADDEGTVEGEFREV) are compositionally biased toward basic and acidic residues.

The protein belongs to the heat shock protein 70 family.

In terms of biological role, acts as a chaperone. In Dehalococcoides mccartyi (strain ATCC BAA-2100 / JCM 16839 / KCTC 5957 / BAV1), this protein is Chaperone protein DnaK.